The sequence spans 141 residues: Large ribosomal subunit protein uL16m (141 aa).

This sequence belongs to the universal ribosomal protein uL16 family.

It localises to the mitochondrion. In Acanthamoeba castellanii (Amoeba), this protein is Large ribosomal subunit protein uL16m (RPL16).